Consider the following 378-residue polypeptide: Acid phosphatase-like protein XcAP-2 (378 aa).

The N-terminal stretch at 1–19 (MKTTILLLVVLTIVQLSKA) is a signal peptide. 3 disulfide bridges follow: C147–C374, C168–C220, and C347–C351.

The protein belongs to the histidine acid phosphatase family.

The protein localises to the secreted. Probably modulates blood feeding of fleas on vertebrate species by binding and sequestering different mediators involved in the host response. Binds histamine. Binds leukotriene B4, leukotriene C4, leukotriene D4 and leukotriene E4. Does not bind serotonin, adrenaline, noradrenaline, ADP, and stable analogs of thromboxane A2: U-46619 and cTXA2. In Xenopsylla cheopis (Oriental rat flea), this protein is Acid phosphatase-like protein XcAP-2.